A 64-amino-acid polypeptide reads, in one-letter code: Putative calcium channel toxin Tx758 (64 aa).

An N-terminal signal peptide occupies residues 1–18 (MSTFVIVFLLLTAVLCHA). The propeptide occupies 19–27 (EPALDETAR). Intrachain disulfides connect Cys-29–Cys-43, Cys-36–Cys-49, and Cys-42–Cys-58.

The protein belongs to the scorpion calcin-like family. In terms of tissue distribution, expressed by the venom gland.

It localises to the secreted. Its function is as follows. May increase intracellular calcium release through the activation of nuclear inositol 1,4,5-trisphosphate receptors (ITPR) of cardiomyocytes, thereby causing an increase in the contraction frequency of these cells. This Buthus israelis (Israeli scorpion) protein is Putative calcium channel toxin Tx758.